The following is a 79-amino-acid chain: Small ribosomal subunit protein bS18 (79 aa).

The protein belongs to the bacterial ribosomal protein bS18 family. As to quaternary structure, part of the 30S ribosomal subunit. Forms a tight heterodimer with protein bS6.

Binds as a heterodimer with protein bS6 to the central domain of the 16S rRNA, where it helps stabilize the platform of the 30S subunit. The sequence is that of Small ribosomal subunit protein bS18 from Rhodopseudomonas palustris (strain BisB5).